The sequence spans 227 residues: Ribonuclease S-5 (227 aa).

A signal peptide spans 1-27 (MGITGMVYVVTMVFLLIVLILSSSTVG). RNA is bound at residue Gln36. Cysteines 42 and 49 form a disulfide. Asn45 carries an N-linked (GlcNAc...) asparagine glycan. RNA is bound by residues His60, 97 to 98 (NV), Phe107, 110 to 111 (KE), and 114 to 115 (KH). The active-site Proton donor is the His60. Residues Cys75 and Cys118 are joined by a disulfide bond. Glu111 is an active-site residue. His115 functions as the Proton acceptor in the catalytic mechanism. Asn143 carries an N-linked (GlcNAc...) asparagine glycan. 2 cysteine pairs are disulfide-bonded: Cys182–Cys220 and Cys197–Cys208.

It belongs to the RNase T2 family. N-glycan at Asn-45 consists of disaccharide (GlcNAc-GlcNAc). N-linked core structure at Asn-143 contains xylose.

It carries out the reaction a ribonucleotidyl-ribonucleotide-RNA + H2O = a 3'-end 3'-phospho-ribonucleotide-RNA + a 5'-end dephospho-ribonucleoside-RNA + H(+). Functionally, self-incompatibility (SI) is the inherited ability of a flowering plant to prevent self-fertilization by discriminating between self and non-self pollen during pollination. In many species, self-incompatibility is controlled by the single, multiallelic locus S. This is Ribonuclease S-5 from Pyrus pyrifolia (Chinese pear).